A 301-amino-acid chain; its full sequence is MKKIILTIGCPGSGKSTWAREFIAKNPGFYNINRDDYRQSIMAHEERDEYKYTKKKEGIVTGMQFDTAKSILYGGDSVKGVIISDTNLNPERRLAWETFAKEYGWKVEHKVFDVPWTELVKRNSKRGTKAVPIDVLRSMYKSMREYLGLPVYNGTPGKPKAVIFDVDGTLAKMNGRGPYDLEKCDTDVINPMVVELSKMYALMGYQIVVVSGRESGTKEDPTKYYRMTRKWVEDIAGVPLVMQCQREQGDTRKDDVVKEEIFWKHIAPHFDVKLAIDDRTQVVEMWRRIGVECWQVASGDF.

In terms of assembly, homotetramer. The cofactor is Mg(2+).

It catalyses the reaction a 5'-end dephospho-2'-deoxyribonucleoside-DNA + ATP = a 5'-end 5'-phospho-2'-deoxyribonucleoside-DNA + ADP + H(+). It carries out the reaction a 2'-deoxyribonucleoside 3'-phosphate + H2O = a 2'-deoxyribonucleoside + phosphate. Its function is as follows. Acts as a 5'-hydroxyl kinase, a 3'-phosphatase and a 2',3'-cyclic phosphodiesterase. Catalyzes the transfer of the terminal phosphate of ATP to the 5'-hydroxyl termini of ribo- and deoxyribonucleotides. In the presence of ADP the enzyme also catalyzes an exchange reaction. In the exchange reaction, an excess ADP causes the enzyme to transfer the 5' terminal phosphate from phosphorylated DNA to ADP. Involved in countering a host defense mechanism which activates T4-induced anticodon nuclease and shuts off viral translation. The polynucleotide kinase modifies the ends of nicked tRNA generated by the antiviral response of the host bacteria and facilitates repair by T4 RNA ligase. This chain is Polynucleotide kinase (pseT), found in Escherichia coli (Bacteriophage T4).